The following is a 429-amino-acid chain: Saccharopine dehydrogenase-like oxidoreductase (429 aa).

Position 2 is an N-acetylalanine (alanine 2). 3 positions are modified to phosphoserine: serine 209, serine 215, and serine 217.

The protein belongs to the saccharopine dehydrogenase family.

The sequence is that of Saccharopine dehydrogenase-like oxidoreductase (Sccpdh) from Mus musculus (Mouse).